Here is a 274-residue protein sequence, read N- to C-terminus: 2,3,4,5-tetrahydropyridine-2,6-dicarboxylate N-succinyltransferase (274 aa).

2 residues coordinate substrate: R104 and D141.

This sequence belongs to the transferase hexapeptide repeat family. In terms of assembly, homotrimer.

The protein resides in the cytoplasm. The catalysed reaction is (S)-2,3,4,5-tetrahydrodipicolinate + succinyl-CoA + H2O = (S)-2-succinylamino-6-oxoheptanedioate + CoA. It participates in amino-acid biosynthesis; L-lysine biosynthesis via DAP pathway; LL-2,6-diaminopimelate from (S)-tetrahydrodipicolinate (succinylase route): step 1/3. This chain is 2,3,4,5-tetrahydropyridine-2,6-dicarboxylate N-succinyltransferase, found in Shewanella halifaxensis (strain HAW-EB4).